The sequence spans 132 residues: RuBisCO chaperone RbcX (132 aa).

Positions His110 to His132 are disordered. Residues Leu111 to His132 show a composition bias toward polar residues.

The protein belongs to the RbcX family. In terms of assembly, homodimer. Interacts with the exposed C-terminal peptide of RbcL via its central cleft, contacts a second RbcL monomer via its peripheral polar surface. RbcX and Raf1 can bind simultaneously to RbcL.

It localises to the carboxysome. The protein resides in the cytoplasm. Functionally, an RbcL-specific chaperone. The central cleft of the RbcX homodimer (RbcX2) binds the C-terminus of an RbcL monomer, stabilizing the C-terminus and probably preventing its reassociation with chaperonin GroEL-ES. At the same time the peripheral region of RbcX2 binds a second RbcL monomer, bridging the RbcL homodimers in the correct orientation. The RbcX2(2)-bound RbcL dimers then assemble into the RbcL8 core (RbcL8-(RbcX2)8). RbcS binding triggers the release of RbcX2. In terms of biological role, when rbcL-rbcX-rbcS or rbcL-rbcS were overexpressed in E.coli no change in reconstituted RuBisCO activity was observed, which suggests RbcX plays no role in RuBisCO assembly in this system. However in PubMed:8472962 E.coli chaperones groL and groS were also overexpressed, which may compensate for lack of rbcX. This is RuBisCO chaperone RbcX from Nostoc sp. (strain PCC 7120 / SAG 25.82 / UTEX 2576).